The following is a 464-amino-acid chain: Dolichyl-diphosphooligosaccharide--protein glycosyltransferase subunit 1B (464 aa).

A signal peptide spans 1-24 (MAARIGIFSVFVAVLLSISAFSSA). The Lumenal portion of the chain corresponds to 25–436 (QDLQIVNAER…TFKPIYMLAE (412 aa)). N106 and N298 each carry an N-linked (GlcNAc...) asparagine glycan. K310 is covalently cross-linked (Glycyl lysine isopeptide (Lys-Gly) (interchain with G-Cter in ubiquitin)). Residue N352 is glycosylated (N-linked (GlcNAc...) asparagine). A helical transmembrane segment spans residues 437 to 457 (PFMLVSAFFLVFVASLAYVHI). The Cytoplasmic portion of the chain corresponds to 458 to 464 (DLNIVRK).

This sequence belongs to the OST1 family. In terms of assembly, component of the oligosaccharyltransferase (OST) complex.

It is found in the endoplasmic reticulum membrane. It functions in the pathway protein modification; protein glycosylation. Subunit of the oligosaccharyl transferase (OST) complex that catalyzes the initial transfer of a defined glycan (Glc(3)Man(9)GlcNAc(2) in eukaryotes) from the lipid carrier dolichol-pyrophosphate to an asparagine residue within an Asn-X-Ser/Thr consensus motif in nascent polypeptide chains, the first step in protein N-glycosylation. N-glycosylation occurs cotranslationally and the complex associates with the Sec61 complex at the channel-forming translocon complex that mediates protein translocation across the endoplasmic reticulum (ER). All subunits are required for a maximal enzyme activity. The protein is Dolichyl-diphosphooligosaccharide--protein glycosyltransferase subunit 1B (OST1B) of Arabidopsis thaliana (Mouse-ear cress).